A 273-amino-acid chain; its full sequence is 2,3,4,5-tetrahydropyridine-2,6-dicarboxylate N-succinyltransferase (273 aa).

Substrate is bound by residues R104 and D141.

Belongs to the transferase hexapeptide repeat family. As to quaternary structure, homotrimer.

The protein localises to the cytoplasm. The enzyme catalyses (S)-2,3,4,5-tetrahydrodipicolinate + succinyl-CoA + H2O = (S)-2-succinylamino-6-oxoheptanedioate + CoA. It participates in amino-acid biosynthesis; L-lysine biosynthesis via DAP pathway; LL-2,6-diaminopimelate from (S)-tetrahydrodipicolinate (succinylase route): step 1/3. This Thioalkalivibrio sulfidiphilus (strain HL-EbGR7) protein is 2,3,4,5-tetrahydropyridine-2,6-dicarboxylate N-succinyltransferase.